The primary structure comprises 542 residues: Monocarboxylate transporter 3 (542 aa).

At 1 to 19 the chain is on the cytoplasmic side; the sequence is MGRADPEEGQLPAPVKPPD. Residues 20 to 40 form a helical membrane-spanning segment; the sequence is GGWGWIVLFGCFVITGFSYAF. The Extracellular portion of the chain corresponds to 41–63; that stretch reads PKAVSVYFKELMKDFHVGYSDTA. A helical membrane pass occupies residues 64–84; that stretch reads WISSIMLAMLYGTGPVCSIMV. At 85–93 the chain is on the cytoplasmic side; that stretch reads NQFGCRPVM. Residues 94 to 114 traverse the membrane as a helical segment; it reads LIGGLLASSGMILASFTTNII. At 115 to 119 the chain is on the extracellular side; sequence ELYLT. The helical transmembrane segment at 120–140 threads the bilayer; it reads AGVLTGLGMALNFQPSLIMLG. At 141–152 the chain is on the cytoplasmic side; it reads TYFDKRRPLANG. Residues 153–173 traverse the membrane as a helical segment; the sequence is LAAAGSPVFLSSLSPLGQVLL. Topologically, residues 174-181 are extracellular; the sequence is EKFGWRGG. Residues 182-202 traverse the membrane as a helical segment; sequence FLIMGGLLLNCCTCGAVMRPL. Over 203–265 the chain is Cytoplasmic; sequence DAGMKRKTEK…LDFSIFSNRG (63 aa). The segment at 226 to 247 is disordered; sequence GGKSEEGISTTDGTKKTKKAKK. A helical transmembrane segment spans residues 266 to 286; the sequence is FIIYTISKFILVLGLFVPPIL. Over 287 to 301 the chain is Extracellular; sequence LVNYAKDTGVPDTEA. The chain crosses the membrane as a helical span at residues 302–322; sequence AFLLSIIGFIDIFARPACGMV. Residues 323 to 330 lie on the Cytoplasmic side of the membrane; the sequence is AGLKWVRP. Residues 331 to 351 traverse the membrane as a helical segment; the sequence is HVAYLFSFAMLFNGLTDICSA. Residues 352-357 are Extracellular-facing; the sequence is RASNYT. The helical transmembrane segment at 358–378 threads the bilayer; that stretch reads GLVIFCVFFGISYGMVGALQF. Residues 379-392 are Cytoplasmic-facing; it reads EVLMAIVGSQKFSS. Residues 393–413 form a helical membrane-spanning segment; that stretch reads AIGLVLLIEAFAVLIGPPSAG. The Extracellular segment spans residues 414–423; it reads RLVDALKNYE. Residues 424-444 form a helical membrane-spanning segment; the sequence is VIFYLAGSEVVLSALFLAMAT. The Cytoplasmic portion of the chain corresponds to 445–542; the sequence is YCCLNRGKKT…ADQTVERDSF (98 aa). Residues 453 to 542 are disordered; sequence KTPPPEKNPS…ADQTVERDSF (90 aa). Basolateral sorting signal stretches follow at residues 465–510 and 511–532; these read GGSD…VEDE and QSGEGGRCPEADGEVSSRAGCN. Positions 468–478 are enriched in acidic residues; it reads DTEEAESDVQE.

This sequence belongs to the major facilitator superfamily. Monocarboxylate porter (TC 2.A.1.13) family. Retinal pigment epithelium.

The protein localises to the basolateral cell membrane. The catalysed reaction is (S)-lactate(in) + H(+)(in) = (S)-lactate(out) + H(+)(out). Functionally, probable retinal pigment epithelium (RPE)-specific proton-coupled L-lactate transporter. May facilitate transport of lactate and H(+) out of the retina and could therefore play a role in pH and ion homeostasis of the outer retina. This chain is Monocarboxylate transporter 3 (SLC16A8), found in Gallus gallus (Chicken).